Here is a 171-residue protein sequence, read N- to C-terminus: Protein-export protein SecB (171 aa).

It belongs to the SecB family. Homotetramer, a dimer of dimers. One homotetramer interacts with 1 SecA dimer.

It is found in the cytoplasm. One of the proteins required for the normal export of preproteins out of the cell cytoplasm. It is a molecular chaperone that binds to a subset of precursor proteins, maintaining them in a translocation-competent state. It also specifically binds to its receptor SecA. The chain is Protein-export protein SecB from Jannaschia sp. (strain CCS1).